Reading from the N-terminus, the 37-residue chain is Large ribosomal subunit protein bL36 (37 aa).

It belongs to the bacterial ribosomal protein bL36 family.

The sequence is that of Large ribosomal subunit protein bL36 from Listeria innocua serovar 6a (strain ATCC BAA-680 / CLIP 11262).